We begin with the raw amino-acid sequence, 935 residues long: MPRHKLIASESDVSIEVDEGKDKESCVYYVEVEENCERGKIKQASRDGKRRRERNGETRRKASEKRTNEGESKKAEKKHEKGHRTARKAGEKHGKRQRRKNAGEEDAEDKSSKEKKNMKNEKNKTLKLEEEKEKDVRKKKRKHVKNEEDETNHEKTKQHLKEEKRRKKRKKPETTSESESKSESESASESESKNSPAVGVLGSLTPEELENLKEAVEERKKLITQLKGKPWPMRRKLVVLRESQEFVEKYEGALGKGKGRKLYAYKVMMMKKWMKFQRDFENFKTACIPWEMKIKEIESHFGSSVASYFIFLRWMYGINMILFGLTFGLVMVPEALMGKPYGSLPRKTVPREEEASAMNFAVLWDFGGYAKYSVLFYGYYNSQRAIGWLKFRMPLSYFLVGVGTVAYSYMVVIRTMARNANEEGGGDDTSFNFSWKTFTSWDYLIGNPETADNKFASITTSFKEAIVEEQESRKDDNIHLTRFLRVLANFLVLCCLAGSGYLIYFVVRRSQKFALEGLENYGWWERNEVNMVMSLLGMFCPMLFDVISTLENYHPRIALQWQLGRIFALFLGNLYTFIIALMDAIQLKRAEEEIVKKNMTIWQANLYNGTVPDNSTAPPLTVHPADVPRGPCWETMVGQEFVRLIISDTMTTYITLLIGDFMRAVLVRFLNNCWCWDLEYGFPSYSEFDVSGNVLGLIFNQGMIWMGAFYAPCLPALNLLRLHVSMYLQCWAVMCCNVPQERVFKASGSNNFYMAMLLVILFLSTLPAIYTIVSIPPSFDCGPFSGKPRMFDVIQETLETDFPAWFSKVFSYASNPGLVLPFLLLLVLAIYYLQSTSKTYKRVNMELKKKLQAQNEENKKKNKLAALKAASDLEQARKAGEQRRNSISDLGVNEENPESHVSSSHTSRPPASRGHTSSGHLPGHPQQPQKNSKKR.

2 disordered regions span residues 1–21 (MPRH…DEGK) and 37–204 (ERGK…LGSL). 5 stretches are compositionally biased toward basic and acidic residues: residues 37–47 (ERGKIKQASRD), 54–79 (RNGE…EKKH), 109–136 (DKSS…EKDV), 152–163 (NHEKTKQHLKEE), and 172–184 (PETT…KSES). The next 10 helical transmembrane spans lie at 303-340 (SSVA…MGKP), 392-423 (RMPL…ANEE), 480-510 (LTRF…VRRS), 523-550 (WWER…ISTL), 555-589 (PRIA…QLKR), 633-670 (WETM…VRFL), 690-710 (VSGN…GAFY), 714-736 (LPAL…VMCC), 751-774 (NFYM…TIVS), and 818-851 (LVLP…KKKL). Positions 874–886 (EQARKAGEQRRNS) are enriched in basic and acidic residues. The tract at residues 874-935 (EQARKAGEQR…QQPQKNSKKR (62 aa)) is disordered. 2 stretches are compositionally biased toward polar residues: residues 899–919 (SHVS…TSSG) and 926–935 (QQPQKNSKKR).

The protein belongs to the TMC family. In terms of assembly, interacts specifically with isoform CD3 of PCDH15A (via cytoplasmic domain). In terms of tissue distribution, in adults, expression is restricted to the hair cells of inner ear and lateral line organ. Expressed at higher levels in the larval lateral-line neuromasts than in the larval inner ear. Expressed in the sensory hair cell patches of the ear at 4 days post fertilization (dpf).

The protein resides in the cell membrane. It catalyses the reaction Ca(2+)(in) = Ca(2+)(out). Functionally, pore-forming subunit of the mechanotransducer (MET) non-selective cation channel complex located at the tips of hair-cell stereocilia. Highly permeable to calcium and likely transports monovalent cations. This is Transmembrane channel-like protein 1 from Danio rerio (Zebrafish).